Consider the following 459-residue polypeptide: Ribulose bisphosphate carboxylase (459 aa).

Asn111 is a binding site for substrate. Catalysis depends on Lys166, which acts as the Proton acceptor. Lys168 is a binding site for substrate. 3 residues coordinate Mg(2+): Lys191, Asp193, and Glu194. Lys191 is subject to N6-carboxylysine. His287 functions as the Proton acceptor in the catalytic mechanism. 3 residues coordinate substrate: Arg288, His321, and Ser368.

The protein belongs to the RuBisCO large chain family. Type II subfamily. Homodimer. Requires Mg(2+) as cofactor.

It catalyses the reaction 2 (2R)-3-phosphoglycerate + 2 H(+) = D-ribulose 1,5-bisphosphate + CO2 + H2O. The catalysed reaction is D-ribulose 1,5-bisphosphate + O2 = 2-phosphoglycolate + (2R)-3-phosphoglycerate + 2 H(+). Its function is as follows. RuBisCO catalyzes two reactions: the carboxylation of D-ribulose 1,5-bisphosphate, the primary event in carbon dioxide fixation, as well as the oxidative fragmentation of the pentose substrate. Both reactions occur simultaneously and in competition at the same active site. The chain is Ribulose bisphosphate carboxylase from Paramagnetospirillum magnetotacticum (Aquaspirillum magnetotacticum).